The sequence spans 407 residues: Imidazolonepropionase (407 aa).

The Fe(3+) site is built by H74 and H76. H74 and H76 together coordinate Zn(2+). 4-imidazolone-5-propanoate-binding residues include R83, Y146, and H179. Y146 is an N-formimidoyl-L-glutamate binding site. A Fe(3+)-binding site is contributed by H244. H244 contacts Zn(2+). A 4-imidazolone-5-propanoate-binding site is contributed by Q247. Fe(3+) is bound at residue D319. D319 is a binding site for Zn(2+). Positions 321 and 323 each coordinate N-formimidoyl-L-glutamate. Position 324 (T324) interacts with 4-imidazolone-5-propanoate.

It belongs to the metallo-dependent hydrolases superfamily. HutI family. Zn(2+) is required as a cofactor. Fe(3+) serves as cofactor.

Its subcellular location is the cytoplasm. The enzyme catalyses 4-imidazolone-5-propanoate + H2O = N-formimidoyl-L-glutamate. It participates in amino-acid degradation; L-histidine degradation into L-glutamate; N-formimidoyl-L-glutamate from L-histidine: step 3/3. Its function is as follows. Catalyzes the hydrolytic cleavage of the carbon-nitrogen bond in imidazolone-5-propanoate to yield N-formimidoyl-L-glutamate. It is the third step in the universal histidine degradation pathway. This is Imidazolonepropionase from Salmonella typhi.